A 507-amino-acid polypeptide reads, in one-letter code: Alkyl hydroperoxide reductase subunit F (507 aa).

Residue 207–222 coordinates FAD; sequence DVLIVGGGPASGSAAI. A disulfide bond links cysteine 335 and cysteine 338. NAD(+) is bound at residue 347-361; the sequence is DVAVIGGGNSGVEAA. Position 467–477 (467–477) interacts with FAD; it reads TNVPGIFAAGD.

The protein belongs to the class-II pyridine nucleotide-disulfide oxidoreductase family. As to quaternary structure, homodimer. FAD serves as cofactor.

Its function is as follows. Serves to protect the cell against DNA damage by alkyl hydroperoxides. It can use either NADH or NADPH as electron donor for direct reduction of redox dyes or of alkyl hydroperoxides when combined with the AhpC protein. This is Alkyl hydroperoxide reductase subunit F (ahpF) from Staphylococcus aureus (strain MRSA252).